Reading from the N-terminus, the 210-residue chain is N-(5'-phosphoribosyl)anthranilate isomerase (210 aa).

The protein belongs to the TrpF family.

It carries out the reaction N-(5-phospho-beta-D-ribosyl)anthranilate = 1-(2-carboxyphenylamino)-1-deoxy-D-ribulose 5-phosphate. The protein operates within amino-acid biosynthesis; L-tryptophan biosynthesis; L-tryptophan from chorismate: step 3/5. This Methanococcus aeolicus (strain ATCC BAA-1280 / DSM 17508 / OCM 812 / Nankai-3) protein is N-(5'-phosphoribosyl)anthranilate isomerase.